A 63-amino-acid polypeptide reads, in one-letter code: Large ribosomal subunit protein uL29 (63 aa).

Belongs to the universal ribosomal protein uL29 family.

This chain is Large ribosomal subunit protein uL29, found in Actinobacillus pleuropneumoniae serotype 5b (strain L20).